The following is a 946-amino-acid chain: Bifunctional glutamine synthetase adenylyltransferase/adenylyl-removing enzyme (946 aa).

The adenylyl removase stretch occupies residues 1-441; that stretch reads MSLLNDAALH…EFNWVIGDDE (441 aa). An adenylyl transferase region spans residues 448–946; that stretch reads DQALSELWAL…VIKIWEKFLD (499 aa).

Belongs to the GlnE family. Requires Mg(2+) as cofactor.

The catalysed reaction is [glutamine synthetase]-O(4)-(5'-adenylyl)-L-tyrosine + phosphate = [glutamine synthetase]-L-tyrosine + ADP. The enzyme catalyses [glutamine synthetase]-L-tyrosine + ATP = [glutamine synthetase]-O(4)-(5'-adenylyl)-L-tyrosine + diphosphate. Its function is as follows. Involved in the regulation of glutamine synthetase GlnA, a key enzyme in the process to assimilate ammonia. When cellular nitrogen levels are high, the C-terminal adenylyl transferase (AT) inactivates GlnA by covalent transfer of an adenylyl group from ATP to specific tyrosine residue of GlnA, thus reducing its activity. Conversely, when nitrogen levels are low, the N-terminal adenylyl removase (AR) activates GlnA by removing the adenylyl group by phosphorolysis, increasing its activity. The regulatory region of GlnE binds the signal transduction protein PII (GlnB) which indicates the nitrogen status of the cell. This is Bifunctional glutamine synthetase adenylyltransferase/adenylyl-removing enzyme from Psychromonas ingrahamii (strain DSM 17664 / CCUG 51855 / 37).